The sequence spans 420 residues: COP9 signalosome complex subunit 11 (420 aa).

Residues 177 to 346 (SIHEHPSLVD…VYYKEDLPVG (170 aa)) enclose the PCI domain. The disordered stretch occupies residues 386–420 (VEPLNRSQDMDAFELHEQSEDEEYEEEHLEEGENV). The segment covering 404–420 (SEDEEYEEEHLEEGENV) has biased composition (acidic residues).

In terms of assembly, component of a COP9 signalosome-like (CSN) complex.

It is found in the cytoplasm. The protein resides in the nucleus. In terms of biological role, component of the COP9 signalosome (CSN) complex that acts as an regulator of the ubiquitin (Ubl) conjugation pathway by mediating the deneddylation of the cullin subunit of SCF-type E3 ubiquitin-protein ligase complexes The CSN complex is involved in the regulation of the mating pheromone response. PCI8 may also be involved in transcriptional and translational control. The polypeptide is COP9 signalosome complex subunit 11 (PCI8) (Eremothecium gossypii (strain ATCC 10895 / CBS 109.51 / FGSC 9923 / NRRL Y-1056) (Yeast)).